A 745-amino-acid chain; its full sequence is Probable GMP synthase [glutamine-hydrolyzing] (745 aa).

The interval 1–37 (MKRSSSMLDINEDSQHSTNKAPPPKKAPEDRFDSANM) is disordered. The region spanning 60–252 (RIAILDFGAQ…LFKVVGCCGN (193 aa)) is the Glutamine amidotransferase type-1 domain. Cysteine 138 serves as the catalytic For GATase activity. Catalysis depends on residues histidine 226 and glutamate 228. The GMPS ATP-PPase domain maps to 253-461 (FTIQNREQSC…LGLPESIVQR (209 aa)). 280-286 (SGGVDSA) is an ATP binding site. Arginine 363, aspartate 563, glutamine 662, lysine 737, and glutamate 743 together coordinate substrate.

In terms of assembly, homodimer.

The enzyme catalyses XMP + L-glutamine + ATP + H2O = GMP + L-glutamate + AMP + diphosphate + 2 H(+). It functions in the pathway purine metabolism; GMP biosynthesis; GMP from XMP (L-Gln route): step 1/1. This Caenorhabditis elegans protein is Probable GMP synthase [glutamine-hydrolyzing] (gmps-1).